Consider the following 749-residue polypeptide: 5-methyltetrahydropteroyltriglutamate--homocysteine methyltransferase (749 aa).

5-methyltetrahydropteroyltri-L-glutamate is bound by residues 15–18 and lysine 114; that span reads RELK. Residues 425–427 and glutamate 478 each bind L-homocysteine; that span reads IGS. Residues 425–427 and glutamate 478 each bind L-methionine; that span reads IGS. Tryptophan 555 is a 5-methyltetrahydropteroyltri-L-glutamate binding site. Aspartate 593 contributes to the L-homocysteine binding site. Residue aspartate 593 participates in L-methionine binding. Glutamate 599 provides a ligand contact to 5-methyltetrahydropteroyltri-L-glutamate. Positions 636, 638, and 660 each coordinate Zn(2+). The active-site Proton donor is histidine 689. Residue cysteine 721 participates in Zn(2+) binding.

This sequence belongs to the vitamin-B12 independent methionine synthase family. Requires Zn(2+) as cofactor.

The enzyme catalyses 5-methyltetrahydropteroyltri-L-glutamate + L-homocysteine = tetrahydropteroyltri-L-glutamate + L-methionine. Its pathway is amino-acid biosynthesis; L-methionine biosynthesis via de novo pathway; L-methionine from L-homocysteine (MetE route): step 1/1. Functionally, catalyzes the transfer of a methyl group from 5-methyltetrahydrofolate to homocysteine resulting in methionine formation. The protein is 5-methyltetrahydropteroyltriglutamate--homocysteine methyltransferase of Streptococcus suis (strain 05ZYH33).